The chain runs to 141 residues: Hemoglobin subunit alpha-A (141 aa).

The Globin domain occupies 1 to 141 (VLSPADKSNV…VGTVLTAKYR (141 aa)). His58 contacts O2. His87 lines the heme b pocket.

Belongs to the globin family. Heterotetramer of two alpha chains and two beta chains. Red blood cells.

Its function is as follows. Involved in oxygen transport from the lung to the various peripheral tissues. The polypeptide is Hemoglobin subunit alpha-A (HBAA) (Passer montanus (Eurasian tree sparrow)).